A 207-amino-acid polypeptide reads, in one-letter code: Ion-translocating oxidoreductase complex subunit B (207 aa).

Positions 1 to 29 (MLDLSIIAYLLIAICLIALIFGALLGYFS) are hydrophobic. Residues 35–93 (EADPIVDQIDAILPQSQCGQCGYPGCKPYAEAIANGDQITKCVPGGQPLVVKIAELMGV) enclose the 4Fe-4S domain. Positions 52, 55, 60, 76, 116, 119, 122, 126, 146, 149, 152, and 156 each coordinate [4Fe-4S] cluster. 4Fe-4S ferredoxin-type domains are found at residues 107 to 136 (KVAL…GTNK) and 137 to 166 (AMHT…MIKV).

This sequence belongs to the 4Fe4S bacterial-type ferredoxin family. RnfB subfamily. In terms of assembly, the complex is composed of six subunits: RnfA, RnfB, RnfC, RnfD, RnfE and RnfG. [4Fe-4S] cluster serves as cofactor.

The protein localises to the cell inner membrane. In terms of biological role, part of a membrane-bound complex that couples electron transfer with translocation of ions across the membrane. The sequence is that of Ion-translocating oxidoreductase complex subunit B from Haemophilus ducreyi (strain 35000HP / ATCC 700724).